Here is a 622-residue protein sequence, read N- to C-terminus: Polypeptide N-acetylgalactosaminyltransferase 6 (622 aa).

At Met1 to His8 the chain is on the cytoplasmic side. A helical; Signal-anchor for type II membrane protein membrane pass occupies residues Met9–His28. At Arg29–Val622 the chain is on the lumenal side. A glycan (N-linked (GlcNAc...) asparagine) is linked at Asn86. Cystine bridges form between Cys165–Cys402 and Cys393–Cys474. The interval Leu176–Arg285 is catalytic subdomain A. Residues Asp269, His271, and His407 each contribute to the Mn(2+) site. The catalytic subdomain B stretch occupies residues Pro348–Arg410. N-linked (GlcNAc...) asparagine glycosylation is present at Asn476. The 117-residue stretch at Thr506–Val622 folds into the Ricin B-type lectin domain. The cysteines at positions 509 and 527 are disulfide-linked. The UDP-N-acetyl-alpha-D-galactosamine site is built by Asp511, Glu514, His528, and Asn533. Disulfide bonds link Cys553–Cys566 and Cys597–Cys610.

This sequence belongs to the glycosyltransferase 2 family. GalNAc-T subfamily. Requires Mn(2+) as cofactor. Expressed in placenta and trachea. Weakly expressed in brain and pancreas. Expressed in fibroblast. Weakly or not expressed in lung, liver, muscle, kidney, spleen, thymus, prostate, testis, ovary, intestine, colon, leukocyte, stomach, thyroid, spinal cord, lymph node, trachea, adrenal gland and bone marrow.

It is found in the golgi apparatus membrane. The enzyme catalyses L-seryl-[protein] + UDP-N-acetyl-alpha-D-galactosamine = a 3-O-[N-acetyl-alpha-D-galactosaminyl]-L-seryl-[protein] + UDP + H(+). It carries out the reaction L-threonyl-[protein] + UDP-N-acetyl-alpha-D-galactosamine = a 3-O-[N-acetyl-alpha-D-galactosaminyl]-L-threonyl-[protein] + UDP + H(+). Its pathway is protein modification; protein glycosylation. Catalyzes the initial reaction in O-linked oligosaccharide biosynthesis, the transfer of an N-acetyl-D-galactosamine residue to a serine or threonine residue on the protein receptor. May participate in synthesis of oncofetal fibronectin. Has activity toward MUC1A, MUC2, EA2 and fibronectin peptides. Glycosylates FGF23. In Homo sapiens (Human), this protein is Polypeptide N-acetylgalactosaminyltransferase 6 (GALNT6).